Consider the following 225-residue polypeptide: Enolase-phosphatase E1 (225 aa).

It belongs to the HAD-like hydrolase superfamily. MasA/MtnC family. Monomer. It depends on Mg(2+) as a cofactor.

It catalyses the reaction 5-methylsulfanyl-2,3-dioxopentyl phosphate + H2O = 1,2-dihydroxy-5-(methylsulfanyl)pent-1-en-3-one + phosphate. Its pathway is amino-acid biosynthesis; L-methionine biosynthesis via salvage pathway; L-methionine from S-methyl-5-thio-alpha-D-ribose 1-phosphate: step 3/6. It participates in amino-acid biosynthesis; L-methionine biosynthesis via salvage pathway; L-methionine from S-methyl-5-thio-alpha-D-ribose 1-phosphate: step 4/6. In terms of biological role, bifunctional enzyme that catalyzes the enolization of 2,3-diketo-5-methylthiopentyl-1-phosphate (DK-MTP-1-P) into the intermediate 2-hydroxy-3-keto-5-methylthiopentenyl-1-phosphate (HK-MTPenyl-1-P), which is then dephosphorylated to form the acireductone 1,2-dihydroxy-3-keto-5-methylthiopentene (DHK-MTPene). The chain is Enolase-phosphatase E1 from Shewanella halifaxensis (strain HAW-EB4).